The sequence spans 423 residues: Type II methyltransferase M.NgoBV (423 aa).

An SAM-dependent MTase C5-type domain is found at 4-423; that stretch reads IKFIDLFSGM…AVSERLLHTL (420 aa). C80 is an active-site residue.

This sequence belongs to the class I-like SAM-binding methyltransferase superfamily. C5-methyltransferase family.

It carries out the reaction a 2'-deoxycytidine in DNA + S-adenosyl-L-methionine = a 5-methyl-2'-deoxycytidine in DNA + S-adenosyl-L-homocysteine + H(+). Its function is as follows. A methylase, recognizes the double-stranded sequence 5'-GGNNCC-3', methylates C-5 on both strands, and protects the DNA from cleavage by the NgoBV endonuclease. The protein is Type II methyltransferase M.NgoBV (ngoBVM) of Neisseria gonorrhoeae.